The sequence spans 35 residues: Small toxic polypeptide LdrB (35 aa).

Residues 10-30 (FWHDLAAPILAGIITAAIVGW) form a helical membrane-spanning segment.

Belongs to the Ldr toxic peptide family.

The protein localises to the cell inner membrane. Toxic component of a type I toxin-antitoxin (TA) system. Overexpression causes rapid cell killing, probably by disrupting the cell inner membrane and disruption of ATP synthesis. The polypeptide is Small toxic polypeptide LdrB (ldrB) (Escherichia coli (strain K12)).